Reading from the N-terminus, the 458-residue chain is Probable ECA polymerase (458 aa).

The next 11 membrane-spanning stretches (helical) occupy residues 3 to 23, 37 to 57, 65 to 85, 112 to 132, 154 to 174, 180 to 200, 201 to 221, 222 to 242, 340 to 360, 377 to 397, and 409 to 429; these read LAQF…VLTL, VFFS…TCLL, VVPV…YAIY, THLT…IFFL, GVAL…VYFL, AWFF…VIVG, GTRA…IVRG, WISL…MFWL, LVVM…GMII, YKAA…IVLA, and VFFC…YWLF.

Belongs to the WzyE family. Probably part of a complex composed of WzxE, WzyE and WzzE.

The protein resides in the cell inner membrane. It functions in the pathway bacterial outer membrane biogenesis; enterobacterial common antigen biosynthesis. Its function is as follows. Probably involved in the polymerization of enterobacterial common antigen (ECA) trisaccharide repeat units. The chain is Probable ECA polymerase from Serratia proteamaculans (strain 568).